Here is a 1107-residue protein sequence, read N- to C-terminus: RNA2 polyprotein (1107 aa).

The interval 553-584 is disordered; the sequence is SRSMRFKSPSDLWSRPSVDGGSTSTQPPSKGS. Polar residues predominate over residues 572–581; sequence GGSTSTQPPS.

The protein belongs to the nepoviruses RNA2 polyprotein family. In terms of processing, specific enzymatic cleavages in vivo by the P1 encoded 3C-like protease yield mature proteins.

It is found in the host cell junction. The protein localises to the host plasmodesma. The protein resides in the host cytoplasm. It localises to the host nucleus. Its subcellular location is the virion. Implicated in RNA2 replication. Could also be required for nematode transmission of the virus. Its function is as follows. Transports viral genome to neighboring plant cells directly through plasmosdesmata, without any budding. The movement protein allows efficient cell to cell propagation, by bypassing the host cell wall barrier. Acts by forming a tubular structure at the host plasmodesmata, enlarging it enough to allow free passage of virion capsids. This Raspberry ringspot virus (strain S) (RpRSV) protein is RNA2 polyprotein.